The primary structure comprises 262 residues: Phycoerythrobilin:ferredoxin oxidoreductase (262 aa).

This sequence belongs to the HY2 family.

It carries out the reaction (3Z)-phycoerythrobilin + oxidized 2[4Fe-4S]-[ferredoxin] = 15,16-dihydrobiliverdin + reduced 2[4Fe-4S]-[ferredoxin] + 2 H(+). Its function is as follows. Catalyzes the two-electron reduction of the C2 and C3(1) diene system of 15,16-dihydrobiliverdin. This Parasynechococcus marenigrum (strain WH8102) protein is Phycoerythrobilin:ferredoxin oxidoreductase (pebB).